The sequence spans 622 residues: Sodium/potassium/calcium exchanger 4 (622 aa).

An N-terminal signal peptide occupies residues 1–38; the sequence is MALRGLIRQSKVRRRREMLPQQVGFVCAVLALVCCASG. At 39–97 the chain is on the extracellular side; it reads LFGSLGHKTASAGKHVLLDTWRNRKLMAPINGTPLAKNCTDPAIHEFPTDLFSNKERQH. N-linked (GlcNAc...) asparagine glycosylation is present at Asn-76. Residues 98–118 traverse the membrane as a helical segment; the sequence is GAVLLHILGALYMFYALAIVC. Topologically, residues 119–142 are cytoplasmic; sequence DDFFVPSLEKICEKLHLSEDVAGA. Residues 139-179 form an Alpha-1 repeat; that stretch reads VAGATFMAAGSSTPELFASVIGVFITHGDVGVGTIVGSAVF. Residues 143–163 form a helical membrane-spanning segment; the sequence is TFMAAGSSTPELFASVIGVFI. At 164–172 the chain is on the extracellular side; sequence THGDVGVGT. The chain crosses the membrane as a helical span at residues 173–193; sequence IVGSAVFNILCIIGVCGLFAG. Residues 194-200 are Cytoplasmic-facing; the sequence is QVVRLTW. The helical transmembrane segment at 201 to 221 threads the bilayer; it reads WAVCRDSVYYTLSVIVLIAFI. Topologically, residues 222–224 are extracellular; the sequence is YDE. The chain crosses the membrane as a helical span at residues 225-245; the sequence is EIVWWEGLVLIILYVFYILIM. Topologically, residues 246–457 are cytoplasmic; that stretch reads KYNMKMQTFF…RWEKFFMVTF (212 aa). The tract at residues 358 to 408 is disordered; it reads ANGVNSKPLQNGRHENMENGNVPVENPEDPQQGQEQQPPPQPPPPEPESVE. Residues 394-404 are compositionally biased toward pro residues; sequence QPPPQPPPPEP. Residues 458 to 478 form a helical membrane-spanning segment; that stretch reads ITATLWIAVFSYLMVWLVTII. Residue Gly-479 is a topological domain, extracellular. A helical membrane pass occupies residues 480 to 500; sequence YTLGIPDVIMGITFLAAGTSV. Residues 495 to 526 form an Alpha-2 repeat; that stretch reads AAGTSVPDCMASLIVARQGLGDMAVSNTIGSN. The Cytoplasmic segment spans residues 501–526; it reads PDCMASLIVARQGLGDMAVSNTIGSN. A helical transmembrane segment spans residues 527-547; it reads VFDILVGLGIPWGLQTMVINY. Residues 548–557 are Extracellular-facing; it reads GSTVKINSRG. A helical transmembrane segment spans residues 558–578; sequence LVYSVVLLLGSVALTVLGIHL. Over 579–586 the chain is Cytoplasmic; it reads NKWRLDRK. The chain crosses the membrane as a helical span at residues 587 to 607; sequence LGIYVLVLYAVFLCFSIMIEF. Over 608–622 the chain is Extracellular; it reads NVFTFVNLPMCREDD.

This sequence belongs to the Ca(2+):cation antiporter (CaCA) (TC 2.A.19) family. SLC24A subfamily. Expressed in late secretory-stage and maturation-stage ameloblasts, with significantly increased expression during the late stages of amelogenesis (at protein level). Widely expressed in most regions of the brain, including hippocampus, neocortex, thalamus, striatum and olfactory bulb. Expressed in the olfactory sensory neurons.

It localises to the cell membrane. The protein resides in the cytoplasm. The catalysed reaction is Ca(2+)(out) + K(+)(out) + 4 Na(+)(in) = Ca(2+)(in) + K(+)(in) + 4 Na(+)(out). Its function is as follows. Calcium, potassium:sodium antiporter that transports 1 Ca(2+) and 1 K(+) in exchange for 4 Na(+). Controls the rapid response termination and proper regulation of adaptation in olfactory sensory neurons (OSNs) which subsequently influences how odor information is encoded and perceived. May play a role in calcium transport during amelogenesis. This is Sodium/potassium/calcium exchanger 4 from Mus musculus (Mouse).